Consider the following 541-residue polypeptide: Carboxypeptidase Y homolog A (541 aa).

A signal peptide spans 1-17; that stretch reads MKVATSALLIGAAAAQQ. Positions 18–125 are excised as a propeptide; it reads QQILKFPDSF…KLEQYSLRAK (108 aa). 5 disulfide bridges follow: cysteine 179/cysteine 418, cysteine 313/cysteine 327, cysteine 337/cysteine 360, cysteine 344/cysteine 353, and cysteine 382/cysteine 388. Asparagine 210 is a glycosylation site (N-linked (GlcNAc...) asparagine). Residue serine 266 is part of the active site. Aspartate 457 is a catalytic residue. The N-linked (GlcNAc...) asparagine glycan is linked to asparagine 505. Residue histidine 516 is part of the active site.

The protein belongs to the peptidase S10 family.

It is found in the vacuole. It carries out the reaction Release of a C-terminal amino acid with broad specificity.. Functionally, vacuolar carboxypeptidase involved in degradation of small peptides. Digests preferentially peptides containing an aliphatic or hydrophobic residue in P1' position, as well as methionine, leucine or phenylalanine in P1 position of ester substrate. In Pyrenophora tritici-repentis (strain Pt-1C-BFP) (Wheat tan spot fungus), this protein is Carboxypeptidase Y homolog A (cpyA).